A 464-amino-acid chain; its full sequence is ATP synthase subunit beta (464 aa).

153–160 (GGAGVGKT) contributes to the ATP binding site.

This sequence belongs to the ATPase alpha/beta chains family. As to quaternary structure, F-type ATPases have 2 components, CF(1) - the catalytic core - and CF(0) - the membrane proton channel. CF(1) has five subunits: alpha(3), beta(3), gamma(1), delta(1), epsilon(1). CF(0) has three main subunits: a(1), b(2) and c(9-12). The alpha and beta chains form an alternating ring which encloses part of the gamma chain. CF(1) is attached to CF(0) by a central stalk formed by the gamma and epsilon chains, while a peripheral stalk is formed by the delta and b chains.

The protein localises to the cell inner membrane. It carries out the reaction ATP + H2O + 4 H(+)(in) = ADP + phosphate + 5 H(+)(out). Functionally, produces ATP from ADP in the presence of a proton gradient across the membrane. The catalytic sites are hosted primarily by the beta subunits. This is ATP synthase subunit beta from Burkholderia vietnamiensis (strain G4 / LMG 22486) (Burkholderia cepacia (strain R1808)).